The following is a 353-amino-acid chain: MEPGGGHSLPVLLLLLLLLLLRPSEVNGREAPCPRPCGGRCPAEPPRCAPGVPAVLDGCGCCLVCARQRGESCSPLLPCDESGGLYCDRGPEDGGGTGICMVLEGDNCVFDGMIYRNGETFQPSCKYQCTCRDGQIGCLPRCNLGLLLPGPDCPFPRKIEVPGECCEKWVCEPRDEVLLGGFAMAAYRQEATLGIDVSDSSANCIEQTTEWSACSRSCGMGFSTRVTNRNQQCEMVKQTRLCMMRPCENEEPSDKKGKKCIRTKKSMKAVRFEYKNCTSVQTYKPRYCGLCNDGRCCTPHNTKTIQVEFRCPQGKFLKKPMMLINTCVCHGNCPQSNNAFFQPLDPMSSEAKI.

A signal peptide spans 1–26; it reads MEPGGGHSLPVLLLLLLLLLLRPSEV. An IGFBP N-terminal domain is found at 29–103; that stretch reads REAPCPRPCG…GGGTGICMVL (75 aa). 6 cysteine pairs are disulfide-bonded: Cys33–Cys59, Cys37–Cys61, Cys41–Cys62, Cys48–Cys65, Cys73–Cys87, and Cys79–Cys100. Residues 106–172 form the VWFC domain; it reads DNCVFDGMIY…GECCEKWVCE (67 aa). In terms of domain architecture, TSP type-1 spans 203–248; sequence NCIEQTTEWSACSRSCGMGFSTRVTNRNQQCEMVKQTRLCMMRPCE. Cystine bridges form between Cys260–Cys297, Cys277–Cys311, Cys288–Cys327, Cys291–Cys329, and Cys296–Cys333. Residues 260 to 334 form the CTCK domain; it reads CIRTKKSMKA…NTCVCHGNCP (75 aa). N-linked (GlcNAc...) asparagine glycosylation occurs at Asn276.

This sequence belongs to the CCN family.

It localises to the secreted. Its subcellular location is the cytoplasm. The protein localises to the cell junction. It is found in the gap junction. Immediate-early protein likely to play a role in cell growth regulation. In Coturnix japonica (Japanese quail), this protein is CCN family member 3 (CCN3).